The primary structure comprises 119 residues: Ribonuclease P protein component (119 aa).

The protein belongs to the RnpA family. As to quaternary structure, consists of a catalytic RNA component (M1 or rnpB) and a protein subunit.

The catalysed reaction is Endonucleolytic cleavage of RNA, removing 5'-extranucleotides from tRNA precursor.. Its function is as follows. RNaseP catalyzes the removal of the 5'-leader sequence from pre-tRNA to produce the mature 5'-terminus. It can also cleave other RNA substrates such as 4.5S RNA. The protein component plays an auxiliary but essential role in vivo by binding to the 5'-leader sequence and broadening the substrate specificity of the ribozyme. The sequence is that of Ribonuclease P protein component from Streptococcus equi subsp. zooepidemicus (strain MGCS10565).